The chain runs to 488 residues: 3-octaprenyl-4-hydroxybenzoate carboxy-lyase (488 aa).

A Mn(2+)-binding site is contributed by N172. Prenylated FMN contacts are provided by residues I175–R177, R189–L191, and R194–G195. E238 contributes to the Mn(2+) binding site. D287 serves as the catalytic Proton donor.

It belongs to the UbiD family. As to quaternary structure, homohexamer. Prenylated FMN serves as cofactor. It depends on Mn(2+) as a cofactor.

It localises to the cell membrane. The catalysed reaction is a 4-hydroxy-3-(all-trans-polyprenyl)benzoate + H(+) = a 2-(all-trans-polyprenyl)phenol + CO2. It functions in the pathway cofactor biosynthesis; ubiquinone biosynthesis. In terms of biological role, catalyzes the decarboxylation of 3-octaprenyl-4-hydroxy benzoate to 2-octaprenylphenol, an intermediate step in ubiquinone biosynthesis. The polypeptide is 3-octaprenyl-4-hydroxybenzoate carboxy-lyase (Pseudomonas fluorescens (strain Pf0-1)).